Reading from the N-terminus, the 249-residue chain is Flavin-dependent thymidylate synthase (249 aa).

The ThyX domain occupies 7–235; it reads LDVQLIAATA…PVLFDDFHIT (229 aa). Residues 94–97, 105–109, and arginine 174 contribute to the dUMP site; these read ELVR and QLSQR. Residues 97 to 99 and glutamine 105 contribute to the FAD site; that span reads RHR. Positions 97–107 match the ThyX motif motif; the sequence is RHRHFSFSQLS. FAD is bound by residues 190-192 and histidine 196; that span reads NYR. Residue arginine 201 coordinates dUMP. Arginine 201 acts as the Involved in ionization of N3 of dUMP, leading to its activation in catalysis.

Belongs to the thymidylate synthase ThyX family. Homotetramer. The cofactor is FAD.

The catalysed reaction is dUMP + (6R)-5,10-methylene-5,6,7,8-tetrahydrofolate + NADPH + H(+) = dTMP + (6S)-5,6,7,8-tetrahydrofolate + NADP(+). Its pathway is pyrimidine metabolism; dTTP biosynthesis. Catalyzes the reductive methylation of 2'-deoxyuridine-5'-monophosphate (dUMP) to 2'-deoxythymidine-5'-monophosphate (dTMP) while utilizing 5,10-methylenetetrahydrofolate (mTHF) as the methyl donor, and NADPH and FADH(2) as the reductant. In Corynebacterium aurimucosum (strain ATCC 700975 / DSM 44827 / CIP 107346 / CN-1) (Corynebacterium nigricans), this protein is Flavin-dependent thymidylate synthase.